A 378-amino-acid polypeptide reads, in one-letter code: Flagellar P-ring protein 2 (378 aa).

Positions 1–33 are cleaved as a signal peptide; that stretch reads MHEVSDKTNAIHPLQRVSRALFALGLLCFAAMA.

It belongs to the FlgI family. As to quaternary structure, the basal body constitutes a major portion of the flagellar organelle and consists of four rings (L,P,S, and M) mounted on a central rod.

Its subcellular location is the periplasm. The protein localises to the bacterial flagellum basal body. In terms of biological role, assembles around the rod to form the L-ring and probably protects the motor/basal body from shearing forces during rotation. In Hahella chejuensis (strain KCTC 2396), this protein is Flagellar P-ring protein 2.